A 406-amino-acid polypeptide reads, in one-letter code: Elongation factor Tu-B (406 aa).

A tr-type G domain is found at 10-215 (KPHVNVGTIG…AIDEYIPTPV (206 aa)). The interval 19 to 26 (GHVDHGKT) is G1. Residue 19-26 (GHVDHGKT) coordinates GTP. Thr26 is a Mg(2+) binding site. The tract at residues 61–65 (GITIN) is G2. Positions 82-85 (DCPG) are G3. Residues 82–86 (DCPGH) and 137–140 (NKVD) each bind GTP. Residues 137-140 (NKVD) form a G4 region. Residues 175–177 (SAL) form a G5 region. A Phosphothreonine modification is found at Thr395.

It belongs to the TRAFAC class translation factor GTPase superfamily. Classic translation factor GTPase family. EF-Tu/EF-1A subfamily. In terms of assembly, monomer. In terms of processing, phosphorylated on a threonine.

Its subcellular location is the cytoplasm. It catalyses the reaction GTP + H2O = GDP + phosphate + H(+). Its function is as follows. GTP hydrolase that promotes the GTP-dependent binding of aminoacyl-tRNA to the A-site of ribosomes during protein biosynthesis. In terms of biological role, protects glycyl-tRNA(Gly) from hydrolysis by E.coli D-aminoacyl-tRNA deacylase (dtd). In Thermus thermophilus (strain ATCC 27634 / DSM 579 / HB8), this protein is Elongation factor Tu-B.